We begin with the raw amino-acid sequence, 231 residues long: Endo-1,4-beta-xylanase A (231 aa).

An N-terminal signal peptide occupies residues 1–19 (MVSFKSLLVAVSALTGALA). N-linked (GlcNAc...) asparagine glycosylation occurs at N32. The 189-residue stretch at 41–229 (QVTGNSEGYH…SSGSSSIYVQ (189 aa)) folds into the GH11 domain. E125 (nucleophile) is an active-site residue. E216 (proton donor) is an active-site residue.

The protein belongs to the glycosyl hydrolase 11 (cellulase G) family.

Its subcellular location is the secreted. The catalysed reaction is Endohydrolysis of (1-&gt;4)-beta-D-xylosidic linkages in xylans.. It functions in the pathway glycan degradation; xylan degradation. With respect to regulation, inhibited by the proteinaceous endoxylanase inhibitor I from T.aestivum (TAXI-I). In terms of biological role, endo-1,4-beta-xylanase involved in the hydrolysis of xylan, a major structural heterogeneous polysaccharide found in plant biomass representing the second most abundant polysaccharide in the biosphere, after cellulose. Plays an important role in causing fusarium head blight (FHB) on cereal crops. This is Endo-1,4-beta-xylanase A (XYLA) from Gibberella zeae (strain ATCC MYA-4620 / CBS 123657 / FGSC 9075 / NRRL 31084 / PH-1) (Wheat head blight fungus).